A 276-amino-acid chain; its full sequence is Putative translation initiation factor eIF-2B subunit 2-like (276 aa).

The protein belongs to the eIF-2B alpha/beta/delta subunits family. As to quaternary structure, complex of two different subunits.

In terms of biological role, catalyzes the exchange of initiation factor 2-bound GDP for GTP. The protein is Putative translation initiation factor eIF-2B subunit 2-like of Pyrococcus horikoshii (strain ATCC 700860 / DSM 12428 / JCM 9974 / NBRC 100139 / OT-3).